Reading from the N-terminus, the 414-residue chain is Putative dipeptidase TRV_05564 (414 aa).

An N-terminal signal peptide occupies residues 1–20 (MAALFVSLLALTSLVPVQGA). Zn(2+) contacts are provided by His45, Asp47, and Glu157. The cysteines at positions 96 and 186 are disulfide-linked. His184 is a binding site for substrate. 2 residues coordinate Zn(2+): His228 and His249. Substrate-binding residues include Arg260 and Asp320. Asn392 carries an N-linked (GlcNAc...) asparagine glycan.

It belongs to the metallo-dependent hydrolases superfamily. Peptidase M19 family. Zn(2+) serves as cofactor.

It carries out the reaction an L-aminoacyl-L-amino acid + H2O = 2 an L-alpha-amino acid. Hydrolyzes a wide range of dipeptides. This chain is Putative dipeptidase TRV_05564, found in Trichophyton verrucosum (strain HKI 0517).